The following is a 233-amino-acid chain: Probable septum site-determining protein MinC (233 aa).

Belongs to the MinC family. As to quaternary structure, interacts with MinD and FtsZ.

In terms of biological role, cell division inhibitor that blocks the formation of polar Z ring septums. Rapidly oscillates between the poles of the cell to destabilize FtsZ filaments that have formed before they mature into polar Z rings. Prevents FtsZ polymerization. This is Probable septum site-determining protein MinC from Proteus mirabilis (strain HI4320).